The primary structure comprises 555 residues: Glucose-6-phosphate isomerase (555 aa).

Glu-355 functions as the Proton donor in the catalytic mechanism. Catalysis depends on residues His-386 and Lys-514.

The protein belongs to the GPI family.

The protein resides in the cytoplasm. The catalysed reaction is alpha-D-glucose 6-phosphate = beta-D-fructose 6-phosphate. It participates in carbohydrate biosynthesis; gluconeogenesis. It functions in the pathway carbohydrate degradation; glycolysis; D-glyceraldehyde 3-phosphate and glycerone phosphate from D-glucose: step 2/4. In terms of biological role, catalyzes the reversible isomerization of glucose-6-phosphate to fructose-6-phosphate. The polypeptide is Glucose-6-phosphate isomerase (Buchnera aphidicola subsp. Schizaphis graminum (strain Sg)).